The following is a 333-amino-acid chain: Lipoyl synthase (333 aa).

Over residues 1–15 (MSTLVESPVPSNDSQ) the composition is skewed to polar residues. Residues 1–34 (MSTLVESPVPSNDSQAAAPAAYDPTQKQKSQAKT) are disordered. The [4Fe-4S] cluster site is built by Cys80, Cys85, Cys91, Cys106, Cys110, Cys113, and Ser320. In terms of domain architecture, Radical SAM core spans 91-309 (CFGKGTATFM…EREAYAMGFT (219 aa)).

The protein belongs to the radical SAM superfamily. Lipoyl synthase family. The cofactor is [4Fe-4S] cluster.

The protein localises to the cytoplasm. The catalysed reaction is [[Fe-S] cluster scaffold protein carrying a second [4Fe-4S](2+) cluster] + N(6)-octanoyl-L-lysyl-[protein] + 2 oxidized [2Fe-2S]-[ferredoxin] + 2 S-adenosyl-L-methionine + 4 H(+) = [[Fe-S] cluster scaffold protein] + N(6)-[(R)-dihydrolipoyl]-L-lysyl-[protein] + 4 Fe(3+) + 2 hydrogen sulfide + 2 5'-deoxyadenosine + 2 L-methionine + 2 reduced [2Fe-2S]-[ferredoxin]. Its pathway is protein modification; protein lipoylation via endogenous pathway; protein N(6)-(lipoyl)lysine from octanoyl-[acyl-carrier-protein]: step 2/2. Catalyzes the radical-mediated insertion of two sulfur atoms into the C-6 and C-8 positions of the octanoyl moiety bound to the lipoyl domains of lipoate-dependent enzymes, thereby converting the octanoylated domains into lipoylated derivatives. The chain is Lipoyl synthase from Bordetella parapertussis (strain 12822 / ATCC BAA-587 / NCTC 13253).